Consider the following 628-residue polypeptide: Set1/Ash2 histone methyltransferase complex subunit ASH2 (628 aa).

At methionine 1 the chain carries N-acetylmethionine. Residues 1–18 (MAAAGAGPGQEAGAGPGP) show a composition bias toward gly residues. The PHD-type; atypical zinc finger occupies 1-66 (MAAAGAGPGQ…SGEAEGGEAN (66 aa)). Positions 1 to 107 (MAAAGAGPGQ…QAGSVDEENG (107 aa)) are disordered. The span at 36-65 (AAGAAAPPGEGISAAPTVEPSSGEAEGGEA) shows a compositional bias: low complexity. Positions 67–177 (LVDVSGGLET…MCLSALANLT (111 aa)) are DNA-binding. The residue at position 101 (serine 101) is a Phosphoserine. The segment at 117–150 (CGICTKWFTADTFGIDTSSCLPFMTNYSFHCNVC) adopts a C4-type zinc-finger fold. Residues 235-252 (LVKEHPDPGSKDPEEDYP) show a composition bias toward basic and acidic residues. Residues 235-331 (LVKEHPDPGS…AQRLPPHGYP (97 aa)) form a disordered region. The span at 270–282 (NQKQSSAVSTSGN) shows a compositional bias: polar residues. Gly residues predominate over residues 283 to 295 (LNGGIAAGSSGKG). Arginine 296 carries the post-translational modification Asymmetric dimethylarginine; by PRMT1 and PRMT5. Residue serine 316 is modified to Phosphoserine. Residues 316-628 (SDPLFSAQRL…DGRRSPPWEP (313 aa)) are interaction with RBBP5. A B30.2/SPRY domain is found at 360–583 (LDCWAGKPIP…VSINFGPCFK (224 aa)).

In terms of assembly, interacts with HCFC1. Core component of several methyltransferase-containing complexes including MLL1/MLL, MLL2/3 (also named ASCOM complex) and MLL4/WBP7. Each complex is at least composed of ASH2L, RBBP5, WDR5, DPY30, one or more specific histone methyltransferases (KMT2A/MLL1, KMT2D/MLL2, KMT2C/MLL3 and KMT2B/MLL4), and the facultative components PAGR1, BACC1, CHD8, E2F6, HCFC1, HCFC2, HSP70, INO80C, KDM6A, KANSL1, LAS1L, MAX, MCRS1, MEN1, MGA, KAT8/MOF, NCOA6, PAXIP1/PTIP, PELP1, PHF20, PRP31, RING2, RUVB1/TIP49A, RUVB2/TIP49B, SENP3, TAF1, TAF4, TAF6, TAF7, TAF9, TEX10 and alpha- and beta-tubulin. Component of the SET1 complex, at least composed of the catalytic subunit (SETD1A or SETD1B), WDR5, WDR82, RBBP5, ASH2L/ASH2, CXXC1/CFP1, HCFC1 and DPY30. Found in a complex with RBBP5, ASH2L, DPY30, KMT2A, KMT2D and WDR5. Component of a histone methylation complex composed of at least ZNF335, RBBP5, ASH2L and WDR5; the complex may have histone H3-specific methyltransferase activity, however does not have specificity for 'Lys-4' of histone H3. Within the complex, interacts with ZNF335. Interacts with RBBP5. Components of this complex may associate with components of a nuclear receptor-mediated transcription complex to form a complex at least composed of ZNF335, HCFC1, CCAR2, EMSY, MKI67, RBBP5, ASH2L and WDR5. Within this complex also interacts with CCAR2 and EMSY. Interacts with DPY30. Interacts with SETD1A and SETD1B. Both monomethylated and dimethylated on arginine residues in the C-terminus. Arg-296 is the major site. Methylation is not required for nuclear localization, nor for MLL complex integrity or maintenance of global histone H3K4me3 levels. As to expression, ubiquitously expressed. Predominantly expressed in adult heart and testis and fetal lung and liver, with barely detectable expression in adult lung, liver, kidney, prostate, and peripheral leukocytes.

It localises to the nucleus. Transcriptional regulator. Component or associated component of some histone methyltransferase complexes which regulates transcription through recruitment of those complexes to gene promoters. Component of the Set1/Ash2 histone methyltransferase (HMT) complex, a complex that specifically methylates 'Lys-4' of histone H3, but not if the neighboring 'Lys-9' residue is already methylated. As part of the MLL1/MLL complex it is involved in methylation and dimethylation at 'Lys-4' of histone H3. May play a role in hematopoiesis. In association with RBBP5 and WDR5, stimulates the histone methyltransferase activities of KMT2A, KMT2B, KMT2C, KMT2D, SETD1A and SETD1B. The sequence is that of Set1/Ash2 histone methyltransferase complex subunit ASH2 (ASH2L) from Homo sapiens (Human).